A 312-amino-acid chain; its full sequence is Mycothiol acetyltransferase (312 aa).

N-acetyltransferase domains are found at residues 8 to 136 (PIIR…LPMP) and 149 to 301 (LRLD…HQDH). Residue Glu38 participates in 1D-myo-inositol 2-(L-cysteinylamino)-2-deoxy-alpha-D-glucopyranoside binding. Residues 77 to 79 (LMV) and 85 to 90 (RQGIAT) contribute to the acetyl-CoA site. 1D-myo-inositol 2-(L-cysteinylamino)-2-deoxy-alpha-D-glucopyranoside-binding residues include Glu175, Lys215, and Glu226. Acetyl-CoA-binding positions include 230-232 (LGV) and 237-243 (EGKGVGR). Position 264 (Tyr264) interacts with 1D-myo-inositol 2-(L-cysteinylamino)-2-deoxy-alpha-D-glucopyranoside. 269-274 (NERVVH) serves as a coordination point for acetyl-CoA. The segment at 292–312 (PAKPARHQDHGRQSSPQERDA) is disordered. Residues 297–312 (RHQDHGRQSSPQERDA) are compositionally biased toward basic and acidic residues.

This sequence belongs to the acetyltransferase family. MshD subfamily. Monomer.

It carries out the reaction 1D-myo-inositol 2-(L-cysteinylamino)-2-deoxy-alpha-D-glucopyranoside + acetyl-CoA = mycothiol + CoA + H(+). Functionally, catalyzes the transfer of acetyl from acetyl-CoA to desacetylmycothiol (Cys-GlcN-Ins) to form mycothiol. This is Mycothiol acetyltransferase from Propionibacterium freudenreichii subsp. shermanii (strain ATCC 9614 / DSM 4902 / CIP 103027 / NCIMB 8099 / CIRM-BIA1).